We begin with the raw amino-acid sequence, 153 residues long: 6,7-dimethyl-8-ribityllumazine synthase (153 aa).

5-amino-6-(D-ribitylamino)uracil is bound by residues F21, 55–57, and 79–81; these read AFE and TVI. 84-85 provides a ligand contact to (2S)-2-hydroxy-3-oxobutyl phosphate; the sequence is AT. H87 acts as the Proton donor in catalysis. F112 contacts 5-amino-6-(D-ribitylamino)uracil. R126 is a (2S)-2-hydroxy-3-oxobutyl phosphate binding site.

Belongs to the DMRL synthase family. Forms an icosahedral capsid composed of 60 subunits, arranged as a dodecamer of pentamers.

It carries out the reaction (2S)-2-hydroxy-3-oxobutyl phosphate + 5-amino-6-(D-ribitylamino)uracil = 6,7-dimethyl-8-(1-D-ribityl)lumazine + phosphate + 2 H2O + H(+). It functions in the pathway cofactor biosynthesis; riboflavin biosynthesis; riboflavin from 2-hydroxy-3-oxobutyl phosphate and 5-amino-6-(D-ribitylamino)uracil: step 1/2. Its function is as follows. Catalyzes the formation of 6,7-dimethyl-8-ribityllumazine by condensation of 5-amino-6-(D-ribitylamino)uracil with 3,4-dihydroxy-2-butanone 4-phosphate. This is the penultimate step in the biosynthesis of riboflavin. This Bacillus cereus (strain G9842) protein is 6,7-dimethyl-8-ribityllumazine synthase.